The primary structure comprises 228 residues: Phosphoribosylformylglycinamidine synthase subunit PurQ (228 aa).

One can recognise a Glutamine amidotransferase type-1 domain in the interval 3–226 (FAVIVFPGSN…VKYWRETHVV (224 aa)). Catalysis depends on Cys86, which acts as the Nucleophile. Catalysis depends on residues His195 and Glu197.

As to quaternary structure, part of the FGAM synthase complex composed of 1 PurL, 1 PurQ and 2 PurS subunits.

The protein resides in the cytoplasm. The enzyme catalyses N(2)-formyl-N(1)-(5-phospho-beta-D-ribosyl)glycinamide + L-glutamine + ATP + H2O = 2-formamido-N(1)-(5-O-phospho-beta-D-ribosyl)acetamidine + L-glutamate + ADP + phosphate + H(+). The catalysed reaction is L-glutamine + H2O = L-glutamate + NH4(+). It participates in purine metabolism; IMP biosynthesis via de novo pathway; 5-amino-1-(5-phospho-D-ribosyl)imidazole from N(2)-formyl-N(1)-(5-phospho-D-ribosyl)glycinamide: step 1/2. Its function is as follows. Part of the phosphoribosylformylglycinamidine synthase complex involved in the purines biosynthetic pathway. Catalyzes the ATP-dependent conversion of formylglycinamide ribonucleotide (FGAR) and glutamine to yield formylglycinamidine ribonucleotide (FGAM) and glutamate. The FGAM synthase complex is composed of three subunits. PurQ produces an ammonia molecule by converting glutamine to glutamate. PurL transfers the ammonia molecule to FGAR to form FGAM in an ATP-dependent manner. PurS interacts with PurQ and PurL and is thought to assist in the transfer of the ammonia molecule from PurQ to PurL. This chain is Phosphoribosylformylglycinamidine synthase subunit PurQ, found in Geobacillus sp. (strain WCH70).